A 271-amino-acid polypeptide reads, in one-letter code: Oligodendrocyte transcription factor 1 (271 aa).

Residues Tyr38–Arg117 form a disordered region. Low complexity predominate over residues Ser43–Thr61. A bHLH domain is found at Gln105 to Leu164.

Expressed in the brain, in oligodendrocytes. Strongly expressed in oligodendrogliomas, while expression is weak to moderate in astrocytomas. Expression in glioblastomas is highly variable.

The protein localises to the nucleus. Functionally, promotes formation and maturation of oligodendrocytes, especially within the brain. Cooperates with OLIG2 to establish the pMN domain of the embryonic neural tube. This is Oligodendrocyte transcription factor 1 (OLIG1) from Homo sapiens (Human).